Reading from the N-terminus, the 431-residue chain is Histidine--tRNA ligase (431 aa).

The protein belongs to the class-II aminoacyl-tRNA synthetase family. Homodimer.

It localises to the cytoplasm. The catalysed reaction is tRNA(His) + L-histidine + ATP = L-histidyl-tRNA(His) + AMP + diphosphate + H(+). This is Histidine--tRNA ligase from Finegoldia magna (strain ATCC 29328 / DSM 20472 / WAL 2508) (Peptostreptococcus magnus).